Here is a 360-residue protein sequence, read N- to C-terminus: MSIRSNFVRLLKKQVSIIKLQKKCSHSVAVIGAPFSKGQKRRGVEHGPAAIRSAGLIERLSNLGCNVCDFGDLHFSKVPNDELYNSIVKHPRTVGLACKVLAEEVSKAVGAGHTCVTLGGDHSLAFGSITGHAQQCPDLCVIWVDAHADINTPLTTPSGNLHGQPVSFLLRELQDKVPPIPGFSWAKPCLSKSDIVYIGLRDLDPAEQFILKNYNISYYSMRHIDCMGIKKVMEKTFDQLLGRRDRPIHLSFDIDAFDPALAPATGTPVIGGLTYREGVYITEEIHNTGMLSAVDLVEVNPVLAATSEEVKATANLAVDVIASCFGQTREGAHTRADTIIDVLPTPSTSYESDNEEQVRI.

4 residues coordinate Mn(2+): histidine 122, aspartate 145, histidine 147, and aspartate 149. Substrate-binding positions include 147 to 151 (HADIN), 158 to 160 (SGN), and aspartate 204. Aspartate 253 and aspartate 255 together coordinate Mn(2+). Substrate contacts are provided by threonine 267 and glutamate 298.

This sequence belongs to the arginase family. As to quaternary structure, homotrimer. It depends on Mn(2+) as a cofactor. In terms of tissue distribution, expressed at differing tadpole stages in tail, intestine, hindlimb and trunk region. Strongest in tadpole tail.

It carries out the reaction L-arginine + H2O = urea + L-ornithine. It functions in the pathway nitrogen metabolism; urea cycle; L-ornithine and urea from L-arginine: step 1/1. Functionally, as well as its role in the urea cycle, may be involved in tissue remodeling. The protein is Arginase, non-hepatic 2 (arg2-b) of Xenopus laevis (African clawed frog).